Consider the following 231-residue polypeptide: ABC transporter ATP-binding protein YtrE (231 aa).

Residues 4-231 form the ABC transporter domain; sequence VQHIDHSFTI…VLKGGITVEV (228 aa). 42–49 provides a ligand contact to ATP; that stretch reads GRSGSGKS.

It belongs to the ABC transporter superfamily. In terms of assembly, the complex is composed of 2 ATP-binding proteins (YtrB and YtrE), 2 transmembrane proteins (YtrC and YtrD) and a solute-binding protein (YtrF).

The protein localises to the cell membrane. Its function is as follows. Part of the ABC transporter complex YtrBCDEF that plays a role in acetoin utilization during stationary phase and sporulation. The chain is ABC transporter ATP-binding protein YtrE (ytrE) from Bacillus subtilis (strain 168).